A 140-amino-acid chain; its full sequence is Small ribosomal subunit protein uS12 (140 aa).

2 disordered regions span residues 1 to 20 and 35 to 55; these read MPTI…VKSD and QTNV…TMTP. Asp-102 carries the post-translational modification 3-methylthioaspartic acid. The disordered stretch occupies residues 121-140; it reads DGRMQGRSKYGTKRPKAAKK. The segment covering 130-140 has biased composition (basic residues); that stretch reads YGTKRPKAAKK.

The protein belongs to the universal ribosomal protein uS12 family. In terms of assembly, part of the 30S ribosomal subunit. Contacts proteins S8 and S17. May interact with IF1 in the 30S initiation complex.

In terms of biological role, with S4 and S5 plays an important role in translational accuracy. Its function is as follows. Interacts with and stabilizes bases of the 16S rRNA that are involved in tRNA selection in the A site and with the mRNA backbone. Located at the interface of the 30S and 50S subunits, it traverses the body of the 30S subunit contacting proteins on the other side and probably holding the rRNA structure together. The combined cluster of proteins S8, S12 and S17 appears to hold together the shoulder and platform of the 30S subunit. This is Small ribosomal subunit protein uS12 from Exiguobacterium sp. (strain ATCC BAA-1283 / AT1b).